Reading from the N-terminus, the 115-residue chain is Large ribosomal subunit protein uL22 (115 aa).

It belongs to the universal ribosomal protein uL22 family. Part of the 50S ribosomal subunit.

This protein binds specifically to 23S rRNA; its binding is stimulated by other ribosomal proteins, e.g. L4, L17, and L20. It is important during the early stages of 50S assembly. It makes multiple contacts with different domains of the 23S rRNA in the assembled 50S subunit and ribosome. Its function is as follows. The globular domain of the protein is located near the polypeptide exit tunnel on the outside of the subunit, while an extended beta-hairpin is found that lines the wall of the exit tunnel in the center of the 70S ribosome. The polypeptide is Large ribosomal subunit protein uL22 (rplV) (Wolbachia pipientis wMel).